The primary structure comprises 394 residues: Tubby-like F-box protein 2 (394 aa).

A disordered region spans residues 21 to 44 (SKRSWSKSSHIAPDQTTPPLDNIP). The span at 26–44 (SKSSHIAPDQTTPPLDNIP) shows a compositional bias: polar residues. Residues 46-101 (SPWASLPPELLHDIIWRVEESETAWPARAAVVSCASVCKSWRGITMEIVRIPEQCG) form the F-box domain. Disordered stretches follow at residues 200 to 225 (ASST…PTNS) and 268 to 297 (IEEE…PSLR).

The protein belongs to the TUB family. In terms of tissue distribution, ubiquitous.

The chain is Tubby-like F-box protein 2 from Arabidopsis thaliana (Mouse-ear cress).